Consider the following 311-residue polypeptide: Formimidoylglutamase (311 aa).

Mn(2+)-binding residues include His130, Asp155, His157, Asp159, Cys242, and Asp244.

The protein belongs to the arginase family. Mn(2+) serves as cofactor.

The catalysed reaction is N-formimidoyl-L-glutamate + H2O = formamide + L-glutamate. It participates in amino-acid degradation; L-histidine degradation into L-glutamate; L-glutamate from N-formimidoyl-L-glutamate (hydrolase route): step 1/1. Functionally, catalyzes the conversion of N-formimidoyl-L-glutamate to L-glutamate and formamide. The protein is Formimidoylglutamase of Staphylococcus haemolyticus (strain JCSC1435).